Consider the following 240-residue polypeptide: UDP-2,3-diacylglucosamine hydrolase (240 aa).

Mn(2+) is bound by residues Asp8, His10, Asp41, Asn79, and His114. 79-80 (NR) serves as a coordination point for substrate. Substrate contacts are provided by Asp122, Ser160, Asn164, Lys167, and His195. Residues His195 and His197 each coordinate Mn(2+).

The protein belongs to the LpxH family. Mn(2+) is required as a cofactor.

It localises to the cell inner membrane. The catalysed reaction is UDP-2-N,3-O-bis[(3R)-3-hydroxytetradecanoyl]-alpha-D-glucosamine + H2O = 2-N,3-O-bis[(3R)-3-hydroxytetradecanoyl]-alpha-D-glucosaminyl 1-phosphate + UMP + 2 H(+). It participates in glycolipid biosynthesis; lipid IV(A) biosynthesis; lipid IV(A) from (3R)-3-hydroxytetradecanoyl-[acyl-carrier-protein] and UDP-N-acetyl-alpha-D-glucosamine: step 4/6. Hydrolyzes the pyrophosphate bond of UDP-2,3-diacylglucosamine to yield 2,3-diacylglucosamine 1-phosphate (lipid X) and UMP by catalyzing the attack of water at the alpha-P atom. Involved in the biosynthesis of lipid A, a phosphorylated glycolipid that anchors the lipopolysaccharide to the outer membrane of the cell. The sequence is that of UDP-2,3-diacylglucosamine hydrolase from Yersinia pseudotuberculosis serotype O:1b (strain IP 31758).